Consider the following 143-residue polypeptide: Transcriptional regulator MraZ (143 aa).

SpoVT-AbrB domains follow at residues Glu5–Gly47 and Ala76–Arg119.

The protein belongs to the MraZ family. As to quaternary structure, forms oligomers.

The protein resides in the cytoplasm. Its subcellular location is the nucleoid. The sequence is that of Transcriptional regulator MraZ from Moorella thermoacetica (strain ATCC 39073 / JCM 9320).